The chain runs to 513 residues: ABC transporter H family member 2 (513 aa).

Residues Leu-39–Cys-280 enclose the ABC transporter domain. ATP is bound at residue Gly-75–Thr-82. The interval Val-291–Asn-471 is disordered. Positions Ser-324–Ser-360 are enriched in low complexity. Residues Val-361–Phe-386 are compositionally biased toward polar residues. A compositionally biased stretch (low complexity) spans Asn-387–Asn-471.

It belongs to the ABC transporter superfamily.

This is ABC transporter H family member 2 (abcH2) from Dictyostelium discoideum (Social amoeba).